Consider the following 106-residue polypeptide: Pyrimidine/purine nucleoside phosphorylase (106 aa).

The protein belongs to the nucleoside phosphorylase PpnP family.

It carries out the reaction a purine D-ribonucleoside + phosphate = a purine nucleobase + alpha-D-ribose 1-phosphate. The enzyme catalyses adenosine + phosphate = alpha-D-ribose 1-phosphate + adenine. The catalysed reaction is cytidine + phosphate = cytosine + alpha-D-ribose 1-phosphate. It catalyses the reaction guanosine + phosphate = alpha-D-ribose 1-phosphate + guanine. It carries out the reaction inosine + phosphate = alpha-D-ribose 1-phosphate + hypoxanthine. The enzyme catalyses thymidine + phosphate = 2-deoxy-alpha-D-ribose 1-phosphate + thymine. The catalysed reaction is uridine + phosphate = alpha-D-ribose 1-phosphate + uracil. It catalyses the reaction xanthosine + phosphate = alpha-D-ribose 1-phosphate + xanthine. Its function is as follows. Catalyzes the phosphorolysis of diverse nucleosides, yielding D-ribose 1-phosphate and the respective free bases. Can use uridine, adenosine, guanosine, cytidine, thymidine, inosine and xanthosine as substrates. Also catalyzes the reverse reactions. This chain is Pyrimidine/purine nucleoside phosphorylase, found in Burkholderia vietnamiensis (strain G4 / LMG 22486) (Burkholderia cepacia (strain R1808)).